Reading from the N-terminus, the 227-residue chain is Translation initiation factor 6 (227 aa).

This sequence belongs to the eIF-6 family.

Functionally, binds to the 50S ribosomal subunit and prevents its association with the 30S ribosomal subunit to form the 70S initiation complex. The sequence is that of Translation initiation factor 6 from Pyrococcus furiosus (strain ATCC 43587 / DSM 3638 / JCM 8422 / Vc1).